The chain runs to 508 residues: MSSGHPSDNEEPRADLLREEEEEEEEEEDSDEDRGSTRPASPQATRECAGTQGSSRPEVTADGGTGSASGSGCRGSGACDSLFSWICRRKIRRGPYVDPARDHFRTMTRLYSSMSPAADSVNLSTQTHGAVFNLEYSPDGSVLTVACEQTEVLLFDPVSSRHIKTLVEAHEDCVNNIRFLDNRLFATCSDDTTIALWDLRKLNSKVCSLHGHASWVKNIEYDTHTRLLVTSGFDGNVITWDTNRFTEDGCPHKKFFHTRYLMRMRLTPDCSKMLISTSSGYLLILHDLDLTQSLEVGSYRILRARRPPLSTEGSSAGSRSGGPRHTIDNKNHPHREGLSPRNSLEVLTPEIPGERDRGNCITSLQLHPKGWATLLRCSSNMDDQEWTCVYEFQEGAPPRPPVSPRCSLRLTHYIEEANVGRGYIKELCFSPDGRLICSPYGYGVRLLAFDENCAELVDCMPVRTAQLREVRSIYSHSDVVLTSKFSPTHCQFASGCLSGRVALYQPHF.

The interval M1–G75 is disordered. Over residues S7 to L17 the composition is skewed to basic and acidic residues. The segment covering R18–E32 has biased composition (acidic residues). Residues G63–G75 are compositionally biased toward gly residues. WD repeat units lie at residues Q126–T165, A169–C207, G211–C250, and F256–E295. A disordered region spans residues P307–S343. A compositionally biased stretch (basic and acidic residues) spans H325–L338. WD repeat units follow at residues D356–A396, V419–V457, and S475–F508.

It belongs to the WD repeat DCAF10 family.

It participates in protein modification; protein ubiquitination. May function as a substrate receptor for CUL4-DDB1 E3 ubiquitin-protein ligase complex. The protein is DDB1- and CUL4-associated factor 10 (dcaf10) of Danio rerio (Zebrafish).